The sequence spans 593 residues: UvrABC system protein C (593 aa).

The 78-residue stretch at 17–94 (MEPGCYLMKD…IKQYQPRYNI (78 aa)) folds into the GIY-YIG domain. In terms of domain architecture, UVR spans 199-234 (KTILKSLEERMLTASESLDFERAKEYRDLIQHIQNL).

This sequence belongs to the UvrC family. Interacts with UvrB in an incision complex.

Its subcellular location is the cytoplasm. Functionally, the UvrABC repair system catalyzes the recognition and processing of DNA lesions. UvrC both incises the 5' and 3' sides of the lesion. The N-terminal half is responsible for the 3' incision and the C-terminal half is responsible for the 5' incision. The chain is UvrABC system protein C from Staphylococcus aureus (strain USA300).